Reading from the N-terminus, the 614-residue chain is Major facilitator superfamily domain-containing protein 6-like protein B (614 aa).

2 helical membrane-spanning segments follow: residues Leu-41–Leu-61 and Phe-78–Pro-98. The segment covering His-177–Thr-191 has biased composition (polar residues). The interval His-177–His-243 is disordered. Low complexity predominate over residues Gly-205–Ser-227. 9 helical membrane-spanning segments follow: residues Ile-270–Trp-290, Leu-312–Asp-332, Val-345–Leu-365, Ile-393–Phe-413, Glu-425–Phe-445, Trp-457–Trp-477, Trp-480–Ile-500, Leu-520–Ile-540, and Ala-546–Val-566.

It belongs to the major facilitator superfamily. MFSD6 family.

Its subcellular location is the membrane. The protein is Major facilitator superfamily domain-containing protein 6-like protein B (mfsd6l-b) of Xenopus laevis (African clawed frog).